Here is a 128-residue protein sequence, read N- to C-terminus: Aspartate 1-decarboxylase (128 aa).

Ser25 acts as the Schiff-base intermediate with substrate; via pyruvic acid in catalysis. The residue at position 25 (Ser25) is a Pyruvic acid (Ser). Substrate is bound at residue Thr57. Catalysis depends on Tyr58, which acts as the Proton donor. Residue 73–75 coordinates substrate; that stretch reads GSA.

It belongs to the PanD family. Heterooctamer of four alpha and four beta subunits. The cofactor is pyruvate. Post-translationally, is synthesized initially as an inactive proenzyme, which is activated by self-cleavage at a specific serine bond to produce a beta-subunit with a hydroxyl group at its C-terminus and an alpha-subunit with a pyruvoyl group at its N-terminus.

The protein localises to the cytoplasm. The enzyme catalyses L-aspartate + H(+) = beta-alanine + CO2. It participates in cofactor biosynthesis; (R)-pantothenate biosynthesis; beta-alanine from L-aspartate: step 1/1. Functionally, catalyzes the pyruvoyl-dependent decarboxylation of aspartate to produce beta-alanine. The polypeptide is Aspartate 1-decarboxylase (Paraburkholderia xenovorans (strain LB400)).